The sequence spans 74 residues: Putative membrane protein insertion efficiency factor (74 aa).

The protein belongs to the UPF0161 family.

The protein localises to the cell inner membrane. Could be involved in insertion of integral membrane proteins into the membrane. This is Putative membrane protein insertion efficiency factor from Endomicrobium trichonymphae.